Here is a 165-residue protein sequence, read N- to C-terminus: NADH-quinone oxidoreductase subunit I (165 aa).

2 4Fe-4S ferredoxin-type domains span residues 57–86 (RRYD…IESE) and 96–125 (SRYD…ETHI). Cysteine 66, cysteine 69, cysteine 72, cysteine 76, cysteine 105, cysteine 108, cysteine 111, and cysteine 115 together coordinate [4Fe-4S] cluster.

This sequence belongs to the complex I 23 kDa subunit family. As to quaternary structure, NDH-1 is composed of 14 different subunits. Subunits NuoA, H, J, K, L, M, N constitute the membrane sector of the complex. Requires [4Fe-4S] cluster as cofactor.

The protein resides in the cell inner membrane. The enzyme catalyses a quinone + NADH + 5 H(+)(in) = a quinol + NAD(+) + 4 H(+)(out). In terms of biological role, NDH-1 shuttles electrons from NADH, via FMN and iron-sulfur (Fe-S) centers, to quinones in the respiratory chain. The immediate electron acceptor for the enzyme in this species is believed to be ubiquinone. Couples the redox reaction to proton translocation (for every two electrons transferred, four hydrogen ions are translocated across the cytoplasmic membrane), and thus conserves the redox energy in a proton gradient. This Polaromonas sp. (strain JS666 / ATCC BAA-500) protein is NADH-quinone oxidoreductase subunit I.